We begin with the raw amino-acid sequence, 283 residues long: Thymidylate synthase (283 aa).

Position 22 (arginine 22) interacts with dUMP. Cysteine 160 functions as the Nucleophile in the catalytic mechanism. Residues 180 to 183 (RSCD), asparagine 191, and 221 to 223 (HIY) contribute to the dUMP site. Aspartate 183 is a binding site for (6R)-5,10-methylene-5,6,7,8-tetrahydrofolate. Serine 282 lines the (6R)-5,10-methylene-5,6,7,8-tetrahydrofolate pocket.

The protein belongs to the thymidylate synthase family. Bacterial-type ThyA subfamily. Homodimer.

It localises to the cytoplasm. The enzyme catalyses dUMP + (6R)-5,10-methylene-5,6,7,8-tetrahydrofolate = 7,8-dihydrofolate + dTMP. It participates in pyrimidine metabolism; dTTP biosynthesis. Its function is as follows. Catalyzes the reductive methylation of 2'-deoxyuridine-5'-monophosphate (dUMP) to 2'-deoxythymidine-5'-monophosphate (dTMP) while utilizing 5,10-methylenetetrahydrofolate (mTHF) as the methyl donor and reductant in the reaction, yielding dihydrofolate (DHF) as a by-product. This enzymatic reaction provides an intracellular de novo source of dTMP, an essential precursor for DNA biosynthesis. The protein is Thymidylate synthase of Photobacterium profundum (strain SS9).